Here is a 674-residue protein sequence, read N- to C-terminus: MNHSNQMHHDNHASHDHHSGHAHHHGNFKVKFFVSLIFAIPIILLSPLMGVNLPFQFTFPGSEWVVLILSTILFFYGGKPFLSGGKDEIATKKPGMMTLVALGISVAYIYSLYAFYMNNFSSATGHTMDFFWELATLILIMLLGHWIEMNAVGNAGDALKKMAELLPNSAIKVMDNGQREEVKISDIMTDDIVEVKAGESIPTDGIIVQGQTSIDESLVTGESKKVQKNQNDNVIGGSINGSGTIQVKVTAVGEDGYLSQVMGLVNQAQNDKSSAELLSDKVAGYLFYFAVSVGVISFIVWMLIQNDVDFALERLVTVLVIACPHALGLAIPLVTARSTSIGAHNGLIIKNRESVEIAQHIDYVMMDKTGTLTEGNFSVNHYESFKNDLSNDTILSLFASLESQSNHPLAISIVDFAKSKNVSFTNPQDVNNIPGVGLEGLIDNKTYKITNVSYLDKHKLNYDDDLFTKLAQQGNSISYLIEDQQVIGMIAQGDQIKESSKQMVADLLSRNITPVMLTGDNNEVAHAVAKELGISDVHAQLMPEDKESIIKDYQSDGNKVMMVGDGINDAPSLIRADIGIAIGAGTDVAVDSGDIILVKSNPSDIIHFLTLSNNTMRKMVQNLWWGAGYNIVAVPLAAGILAFIGLILSPAIGAILMSLSTIIVAINAFTLKLK.

The segment at M1 to A22 is disordered. Residues M7 to S19 are compositionally biased toward basic and acidic residues. 6 consecutive transmembrane segments (helical) span residues F32 to N52, F57 to G77, G95 to F115, T127 to I147, G284 to I304, and L315 to T335. D367 acts as the 4-aspartylphosphate intermediate in catalysis. Positions 565 and 569 each coordinate Mg(2+). The next 2 membrane-spanning stretches (helical) occupy residues L623–G645 and S649–L671.

This sequence belongs to the cation transport ATPase (P-type) (TC 3.A.3) family. Type IB subfamily.

Its subcellular location is the cell membrane. The enzyme catalyses Cu(+)(in) + ATP + H2O = Cu(+)(out) + ADP + phosphate + H(+). Its function is as follows. Involved in copper transport. This is Probable copper-transporting P-type ATPase B (copB) from Staphylococcus aureus (strain USA300 / TCH1516).